The primary structure comprises 1260 residues: uncharacterized protein (1260 aa).

It belongs to the oxoprolinase family.

This is an uncharacterized protein from Schizosaccharomyces pombe (strain 972 / ATCC 24843) (Fission yeast).